We begin with the raw amino-acid sequence, 284 residues long: NADH-cytochrome b5 reductase 1 (284 aa).

A helical membrane pass occupies residues 8-28 (PLFVFSTIAIIISTFVIFYFV). The 104-residue stretch at 41–144 (DTFQKFPLIE…RGPKGFFTYT (104 aa)) folds into the FAD-binding FR-type domain. FAD contacts are provided by residues 124–139 (DSKK…GPKG) and 150–182 (SFGM…KISL).

It belongs to the flavoprotein pyridine nucleotide cytochrome reductase family. In terms of assembly, monomer. Component of the 2-(3-amino-3-carboxypropyl)histidine synthase complex composed of DPH1, DPH2, DPH3 and a NADH-dependent reductase, predominantly CBR1. The cofactor is FAD.

It localises to the mitochondrion outer membrane. The enzyme catalyses 2 Fe(III)-[cytochrome b5] + NADH = 2 Fe(II)-[cytochrome b5] + NAD(+) + H(+). The catalysed reaction is 2 Fe(3+)-[Dph3] + NADH = 2 Fe(2+)-[Dph3] + NAD(+) + H(+). Its pathway is protein modification; peptidyl-diphthamide biosynthesis. In terms of biological role, NADH-dependent reductase for DPH3 and cytochrome b5. Required for the first step of diphthamide biosynthesis, a post-translational modification of histidine which occurs in elongation factor 2. DPH1 and DPH2 transfer a 3-amino-3-carboxypropyl (ACP) group from S-adenosyl-L-methionine (SAM) to a histidine residue, the reaction is assisted by a reduction system comprising DPH3 and a NADH-dependent reductase, predominantly CBR1. By reducing DPH3, also involved in the formation of the tRNA wobble base modification mcm5s 2U (5-methoxycarbonylmethyl-2-thiouridine), mediated by the elongator complex. The cytochrome b5/NADH cytochrome b5 reductase electron transfer system supports the catalytic activity of several sterol biosynthetic enzymes. The chain is NADH-cytochrome b5 reductase 1 (CBR1) from Scheffersomyces stipitis (strain ATCC 58785 / CBS 6054 / NBRC 10063 / NRRL Y-11545) (Yeast).